Reading from the N-terminus, the 565-residue chain is Thiol:disulfide interchange protein DsbD (565 aa).

A signal peptide spans 1-19; the sequence is MAQRIFTLILLLCSTSVFA. At 20–162 the chain is on the periplasmic side; the sequence is GLFDAPGRSQ…VPQQEQPTAQ (143 aa). Cystine bridges form between C122–C128 and C182–C304. A helical membrane pass occupies residues 163-183; the sequence is LPFSALWALLIGIGIAFTPCV. At 184-207 the chain is on the cytoplasmic side; the sequence is LPMYPLISGIVLGGKQRLSTARAL. Residues 208-228 traverse the membrane as a helical segment; it reads LLTFIYVQGMALTYTALGLVV. Residues 229–242 are Periplasmic-facing; that stretch reads AAAGLQFQAALQHP. A helical transmembrane segment spans residues 243–263; the sequence is YVLIGLTIVFTLLAMSMFGLL. Residues 264–295 lie on the Cytoplasmic side of the membrane; the sequence is TLQLPSSLQTRLTLMSNRQQGGSPGGVFIMGT. The helical transmembrane segment at 296–316 threads the bilayer; the sequence is IAGLICSPCTTAPLSAILLYI. Residues 317 to 322 lie on the Periplasmic side of the membrane; it reads AQSGNM. A helical membrane pass occupies residues 323–343; it reads WLGGGTLYLYALGMGLPLMLI. The Cytoplasmic segment spans residues 344–356; it reads TVFGNRLLPKSGP. A helical transmembrane segment spans residues 357–377; the sequence is WMEQVKTAFGFVILALPVFLL. Residues 378 to 383 lie on the Periplasmic side of the membrane; it reads ERVIGD. The helical transmembrane segment at 384–404 threads the bilayer; the sequence is VWGLRLWSALGVAFFGWAFIT. Residues 405 to 417 lie on the Cytoplasmic side of the membrane; that stretch reads SLQAKRGWMRVVQ. The helical transmembrane segment at 418–438 threads the bilayer; it reads IILLAAALVSVRPLQDWAFGA. The Thioredoxin domain maps to 434-565; that stretch reads WAFGATHTAQ…FSAHLRDRQP (132 aa). The Periplasmic portion of the chain corresponds to 439 to 565; the sequence is THTAQTQTHL…FSAHLRDRQP (127 aa). A disulfide bridge connects residues C480 and C483.

Belongs to the thioredoxin family. DsbD subfamily.

It is found in the cell inner membrane. It carries out the reaction [protein]-dithiol + NAD(+) = [protein]-disulfide + NADH + H(+). It catalyses the reaction [protein]-dithiol + NADP(+) = [protein]-disulfide + NADPH + H(+). Its function is as follows. Required to facilitate the formation of correct disulfide bonds in some periplasmic proteins and for the assembly of the periplasmic c-type cytochromes. Acts by transferring electrons from cytoplasmic thioredoxin to the periplasm. This transfer involves a cascade of disulfide bond formation and reduction steps. In Escherichia coli O157:H7, this protein is Thiol:disulfide interchange protein DsbD.